A 217-amino-acid chain; its full sequence is Adenylate kinase (217 aa).

Position 10-15 (10-15) interacts with ATP; sequence GAGKGT. Positions 30–59 are NMP; that stretch reads STGDMFRAAMKEETQLGLEAKSFIDKGELV. Residues threonine 31, arginine 36, 57-59, 85-88, and glutamine 92 contribute to the AMP site; these read ELV and GFPR. Residues 126–163 are LID; that stretch reads GRRICKNCGATYHLVFNPPAKENVCDKCGGELYQRADD. Arginine 127 serves as a coordination point for ATP. Zn(2+) is bound by residues cysteine 130 and cysteine 133. An ATP-binding site is contributed by 136–137; the sequence is TY. Zn(2+) is bound by residues cysteine 150 and cysteine 153. 2 residues coordinate AMP: arginine 160 and arginine 171. Lysine 199 lines the ATP pocket.

Belongs to the adenylate kinase family. In terms of assembly, monomer.

Its subcellular location is the cytoplasm. It carries out the reaction AMP + ATP = 2 ADP. The protein operates within purine metabolism; AMP biosynthesis via salvage pathway; AMP from ADP: step 1/1. In terms of biological role, catalyzes the reversible transfer of the terminal phosphate group between ATP and AMP. Plays an important role in cellular energy homeostasis and in adenine nucleotide metabolism. The chain is Adenylate kinase from Bacillus pumilus (strain SAFR-032).